Reading from the N-terminus, the 167-residue chain is Urease accessory protein UreE (167 aa).

The segment at 137-158 (EAGAYQSAPHGHSHSHAHGHDH) is disordered.

The protein belongs to the UreE family.

The protein localises to the cytoplasm. Its function is as follows. Involved in urease metallocenter assembly. Binds nickel. Probably functions as a nickel donor during metallocenter assembly. This Pseudomonas putida (strain ATCC 700007 / DSM 6899 / JCM 31910 / BCRC 17059 / LMG 24140 / F1) protein is Urease accessory protein UreE.